Consider the following 148-residue polypeptide: UPF0260 protein KPK_1978 (148 aa).

It belongs to the UPF0260 family.

The protein is UPF0260 protein KPK_1978 of Klebsiella pneumoniae (strain 342).